We begin with the raw amino-acid sequence, 305 residues long: Ribonuclease BN (305 aa).

Zn(2+) contacts are provided by His64, His66, Asp68, His69, His141, Asp212, and His270. Asp68 (proton acceptor) is an active-site residue.

Belongs to the RNase Z family. RNase BN subfamily. As to quaternary structure, homodimer. Zn(2+) is required as a cofactor.

Functionally, zinc phosphodiesterase, which has both exoribonuclease and endoribonuclease activities. The polypeptide is Ribonuclease BN (Citrobacter koseri (strain ATCC BAA-895 / CDC 4225-83 / SGSC4696)).